Consider the following 216-residue polypeptide: Large ribosomal subunit protein eL15 (216 aa).

This sequence belongs to the eukaryotic ribosomal protein eL15 family.

This is Large ribosomal subunit protein eL15 from Metallosphaera sedula (strain ATCC 51363 / DSM 5348 / JCM 9185 / NBRC 15509 / TH2).